The primary structure comprises 608 residues: MTAVFDASAFLATCSNRPGVYRMFDADAKLLYVGKAKSLKKRLASYFRKSGLAPKTAALVVRIAQVETTITANETEALLLEQTLIKEWRPPYNILLRDDKSYPFVFLSSEDEYPRLSLHRGAKKRKGRYFGPYPSAGAIRESLNLLQKAFLVRQCEDSYFRNRTRPCLQYQIKRCKGPCVGLVGPEEYAEDVRHSVMFLEGRSNALADELNTGMEQAAMRLDFEKAAELRDQVAILRRVQDQQSMEGGNGDVDIVAAIVTPGGACVHLISVRGGRVLGSKNFFPQVAIEEEVGEVLLAFLGQYYLSHQERDLPAELIVNVMHEDFPVLVAAIAEARGRQLEISYRVRGTRARWQQLAVTNAEQALGARLANRQHVAARFEALAEALDLAEPPQRLECFDISHSSGEATVASCVVFGPEGPLKSDYRRYNIEGVTAGDDYAAMHQALTRRFSRLKEGEGKMPDILLVDGGKGQLAMAQEVLQELAVAGLILLGVAKGVTRKPGLETLYLNDAAHEFTLPADSPALHLIQQIRDEAHRFAITGHRARRGKARRTSTLEDVPGVGPKRRRDLLKHFGGLQELSRASIDELAKAPGISKKLAEQIYAVLHSE.

Residues 16–94 (NRPGVYRMFD…IKEWRPPYNI (79 aa)) form the GIY-YIG domain. The region spanning 204–239 (NALADELNTGMEQAAMRLDFEKAAELRDQVAILRRV) is the UVR domain.

It belongs to the UvrC family. In terms of assembly, interacts with UvrB in an incision complex.

Its subcellular location is the cytoplasm. The UvrABC repair system catalyzes the recognition and processing of DNA lesions. UvrC both incises the 5' and 3' sides of the lesion. The N-terminal half is responsible for the 3' incision and the C-terminal half is responsible for the 5' incision. The protein is UvrABC system protein C of Pseudomonas paraeruginosa (strain DSM 24068 / PA7) (Pseudomonas aeruginosa (strain PA7)).